A 244-amino-acid chain; its full sequence is 2-C-methyl-D-erythritol 4-phosphate cytidylyltransferase (244 aa).

This sequence belongs to the IspD/TarI cytidylyltransferase family. IspD subfamily.

It carries out the reaction 2-C-methyl-D-erythritol 4-phosphate + CTP + H(+) = 4-CDP-2-C-methyl-D-erythritol + diphosphate. The protein operates within isoprenoid biosynthesis; isopentenyl diphosphate biosynthesis via DXP pathway; isopentenyl diphosphate from 1-deoxy-D-xylulose 5-phosphate: step 2/6. In terms of biological role, catalyzes the formation of 4-diphosphocytidyl-2-C-methyl-D-erythritol from CTP and 2-C-methyl-D-erythritol 4-phosphate (MEP). The sequence is that of 2-C-methyl-D-erythritol 4-phosphate cytidylyltransferase from Solibacter usitatus (strain Ellin6076).